Consider the following 132-residue polypeptide: ATP synthase epsilon chain (132 aa).

The protein belongs to the ATPase epsilon chain family. As to quaternary structure, F-type ATPases have 2 components, CF(1) - the catalytic core - and CF(0) - the membrane proton channel. CF(1) has five subunits: alpha(3), beta(3), gamma(1), delta(1), epsilon(1). CF(0) has three main subunits: a, b and c.

It is found in the cell membrane. Functionally, produces ATP from ADP in the presence of a proton gradient across the membrane. This Desulfitobacterium hafniense (strain Y51) protein is ATP synthase epsilon chain.